The following is a 181-amino-acid chain: Adenylyl-sulfate kinase (181 aa).

20 to 27 contacts ATP; that stretch reads GLSGAGKS. Catalysis depends on serine 94, which acts as the Phosphoserine intermediate.

This sequence belongs to the APS kinase family.

It catalyses the reaction adenosine 5'-phosphosulfate + ATP = 3'-phosphoadenylyl sulfate + ADP + H(+). It participates in sulfur metabolism; hydrogen sulfide biosynthesis; sulfite from sulfate: step 2/3. Catalyzes the synthesis of activated sulfate. In Deinococcus deserti (strain DSM 17065 / CIP 109153 / LMG 22923 / VCD115), this protein is Adenylyl-sulfate kinase.